The chain runs to 449 residues: Asparagine--tRNA ligase (449 aa).

The protein belongs to the class-II aminoacyl-tRNA synthetase family. Homodimer.

The protein localises to the cytoplasm. It carries out the reaction tRNA(Asn) + L-asparagine + ATP = L-asparaginyl-tRNA(Asn) + AMP + diphosphate + H(+). This chain is Asparagine--tRNA ligase, found in Mesomycoplasma hyopneumoniae (strain 232) (Mycoplasma hyopneumoniae).